A 193-amino-acid polypeptide reads, in one-letter code: Sarcoplasmic calcium-binding protein (193 aa).

EF-hand domains lie at 16 to 40 (MYDI…NTLI), 57 to 92 (IMSN…LCCG), and 101 to 136 (CFKT…RSAF). Residues aspartate 18, aspartate 20, asparagine 22, tyrosine 24, aspartate 29, aspartate 70, asparagine 72, aspartate 74, glutamine 76, glutamate 81, aspartate 114, asparagine 116, aspartate 118, and glutamate 125 each contribute to the Ca(2+) site.

In terms of assembly, monomer and dimer. Skeletal muscle (at protein level).

Functionally, like parvalbumins, SCPs seem to be more abundant in fast contracting muscles, but no functional relationship can be established from this distribution. This chain is Sarcoplasmic calcium-binding protein, found in Scylla paramamosain (Mud crab).